A 473-amino-acid polypeptide reads, in one-letter code: MKTDTPSLETPQAARLRRRQLIRQLLERDKTPLAILFMAAVVGTLVGLAAVAFDKGVAWLQNQRMGALVHTADNYPLLLTVAFLCSAVLAMFGYFLVRKYAPEAGGSGIPEIEGALEDQRPVRWWRVLPVKFFGGLGTLGGGMVLGREGPTVQIGGNIGRMVLDIFRLKGDEARHTLLATGAAAGLAAAFNAPLAGILFIIEEMRPQFRYTLISIKAVFIGVIMSTIMYRIFNHEVALIDVGKLSDAPLNTQWLYLILGIIFGIFGPIFNKWVLGMQDLLHRVHGGNITKWVLMGGAIGGLCGLLGFVAPATSGGGFNLIPIATAGNFSMGMLVFIFVARVITTLLCFSSGAPGGIFAPMLALGTVLGTAFGMVVVELFPQYHLEAGTFAIAGMGALLAASIRAPLTGIILVLEMTDNYQLILPMIITGLGATLLAQFTGGKPLYSAILARTLAKQEAEQLARSKAASASENT.

Residues 1–32 (MKTDTPSLETPQAARLRRRQLIRQLLERDKTP) lie on the Cytoplasmic side of the membrane. A helical membrane pass occupies residues 33 to 69 (LAILFMAAVVGTLVGLAAVAFDKGVAWLQNQRMGALV). At 70 to 76 (HTADNYP) the chain is on the periplasmic side. A helical transmembrane segment spans residues 77–100 (LLLTVAFLCSAVLAMFGYFLVRKY). The short motif at 106–110 (GSGIP) is the Selectivity filter part_1 element. Ser-107 lines the chloride pocket. An intramembrane region (helical) is located at residues 109-116 (IPEIEGAL). Residues 117–123 (EDQRPVR) lie on the Cytoplasmic side of the membrane. 2 consecutive transmembrane segments (helical) span residues 124–141 (WWRVLPVKFFGGLGTLGG) and 148–166 (EGPTVQIGGNIGRMVLDIF). A Selectivity filter part_2 motif is present at residues 146 to 150 (GREGP). Over 167-176 (RLKGDEARHT) the chain is Cytoplasmic. Intramembrane regions (helical) lie at residues 177–189 (LLATGAAAGLAAA) and 193–201 (PLAGILFII). At 202 to 214 (EEMRPQFRYTLIS) the chain is on the cytoplasmic side. A helical transmembrane segment spans residues 215 to 232 (IKAVFIGVIMSTIMYRIF). The Periplasmic portion of the chain corresponds to 233 to 252 (NHEVALIDVGKLSDAPLNTQ). The chain crosses the membrane as a helical span at residues 253–281 (WLYLILGIIFGIFGPIFNKWVLGMQDLLH). The Cytoplasmic segment spans residues 282-287 (RVHGGN). The helical transmembrane segment at 288–309 (ITKWVLMGGAIGGLCGLLGFVA) threads the bilayer. At 310–329 (PATSGGGFNLIPIATAGNFS) the chain is on the periplasmic side. A run of 2 helical transmembrane segments spans residues 330 to 349 (MGMLVFIFVARVITTLLCFS) and 355 to 376 (GIFAPMLALGTVLGTAFGMVVV). A Selectivity filter part_3 motif is present at residues 355-359 (GIFAP). Residues Ile-356 and Phe-357 each contribute to the chloride site. The Periplasmic portion of the chain corresponds to 377-386 (ELFPQYHLEA). The helical intramembrane region spans 387–401 (GTFAIAGMGALLAAS). Positions 402 to 404 (IRA) form an intramembrane region, note=Loop between two helices. Residues 405–416 (PLTGIILVLEMT) constitute an intramembrane region (helical). The segment at residues 417–421 (DNYQL) is an intramembrane region (note=Loop between two helices). The helical transmembrane segment at 422 to 438 (ILPMIITGLGATLLAQF) threads the bilayer. Residues 439-473 (TGGKPLYSAILARTLAKQEAEQLARSKAASASENT) lie on the Cytoplasmic side of the membrane. Tyr-445 serves as a coordination point for chloride.

It belongs to the chloride channel (TC 2.A.49) family. ClcA subfamily. As to quaternary structure, homodimer.

It is found in the cell inner membrane. The catalysed reaction is 2 chloride(in) + H(+)(out) = 2 chloride(out) + H(+)(in). Its function is as follows. Proton-coupled chloride transporter. Functions as antiport system and exchanges two chloride ions for 1 proton. Probably acts as an electrical shunt for an outwardly-directed proton pump that is linked to amino acid decarboxylation, as part of the extreme acid resistance (XAR) response. This is H(+)/Cl(-) exchange transporter ClcA from Shigella boydii serotype 18 (strain CDC 3083-94 / BS512).